The chain runs to 275 residues: Glutamate racemase (275 aa).

Residues 12–13 and 44–45 contribute to the substrate site; these read DS and YG. Cysteine 75 serves as the catalytic Proton donor/acceptor. Residue 76–77 coordinates substrate; sequence NT. Residue cysteine 185 is the Proton donor/acceptor of the active site. Residue 186-187 coordinates substrate; sequence TH.

The protein belongs to the aspartate/glutamate racemases family.

It catalyses the reaction L-glutamate = D-glutamate. Its pathway is cell wall biogenesis; peptidoglycan biosynthesis. Functionally, provides the (R)-glutamate required for cell wall biosynthesis. The chain is Glutamate racemase from Mycolicibacterium paratuberculosis (strain ATCC BAA-968 / K-10) (Mycobacterium paratuberculosis).